A 652-amino-acid chain; its full sequence is Phosphoglucomutase 1, chloroplastic (652 aa).

The transit peptide at 1-84 (MAFSAAASAS…LAARRTLRVR (84 aa)) directs the protein to the chloroplast. 2 residues coordinate alpha-D-glucose 1,6-bisphosphate: R118 and S211. S211 acts as the Phosphoserine intermediate in catalysis. S211, D376, D378, and D380 together coordinate Mg(2+). Position 211 is a phosphoserine (S211). D380, R381, T443, E462, S464, and K475 together coordinate alpha-D-glucose 1,6-bisphosphate.

It belongs to the phosphohexose mutase family. Mg(2+) is required as a cofactor.

It localises to the plastid. It is found in the chloroplast. The catalysed reaction is alpha-D-glucose 1-phosphate = alpha-D-glucose 6-phosphate. It catalyses the reaction O-phospho-L-seryl-[protein] + alpha-D-glucose 1-phosphate = alpha-D-glucose 1,6-bisphosphate + L-seryl-[protein]. The enzyme catalyses alpha-D-glucose 1,6-bisphosphate + L-seryl-[protein] = O-phospho-L-seryl-[protein] + alpha-D-glucose 6-phosphate. With respect to regulation, inhibited by the Calvin cycle intermediates fructose-1,6-bisphosphate and ribulose-1,5-bisphosphate. Its function is as follows. Catalyzes the reversible isomerization of alpha-D-glucose 1-phosphate to alpha-D-glucose 6-phosphate. The mechanism proceeds via the intermediate compound alpha-D-glucose 1,6-bisphosphate. This enzyme participates in both the breakdown and synthesis of glucose. Required for sucrose production and accumulation necessary during plant development. Promotes gravitropic responses, negative in shoots but positive in roots, by facilitating starch granules (statoliths) formation. The chain is Phosphoglucomutase 1, chloroplastic from Marchantia polymorpha (Common liverwort).